The chain runs to 199 residues: Inner membrane protein E199L (199 aa).

N-linked (GlcNAc...) asparagine; by host glycosylation is present at Asn131. Residues 150–170 traverse the membrane as a helical segment; it reads INVMNHPFLTLILIILILVII.

It belongs to the asfivirus E199L family. In terms of assembly, interacts with host PYCR2; this interaction results in autophagy activation.

The protein resides in the virion membrane. It localises to the host membrane. Essential for viral fusion with host endosomal membrane and core release. Not required for virus morphogenesis and egress. Induces complete autophagy through the interaction with and down-regulation of host PYCR2. In African swine fever virus (isolate Pig/Kenya/KEN-50/1950) (ASFV), this protein is Inner membrane protein E199L.